Reading from the N-terminus, the 186-residue chain is Acireductone dioxygenase (186 aa).

The segment at 1–21 is disordered; that stretch reads MSRLSIFPDGSTSMDQSSPTP. Polar residues predominate over residues 10 to 20; sequence GSTSMDQSSPT. Fe(2+)-binding residues include histidine 103, histidine 105, glutamate 109, and histidine 147. Ni(2+) contacts are provided by histidine 103, histidine 105, glutamate 109, and histidine 147.

This sequence belongs to the acireductone dioxygenase (ARD) family. Monomer. Fe(2+) is required as a cofactor. Requires Ni(2+) as cofactor.

The enzyme catalyses 1,2-dihydroxy-5-(methylsulfanyl)pent-1-en-3-one + O2 = 3-(methylsulfanyl)propanoate + CO + formate + 2 H(+). It carries out the reaction 1,2-dihydroxy-5-(methylsulfanyl)pent-1-en-3-one + O2 = 4-methylsulfanyl-2-oxobutanoate + formate + 2 H(+). It functions in the pathway amino-acid biosynthesis; L-methionine biosynthesis via salvage pathway; L-methionine from S-methyl-5-thio-alpha-D-ribose 1-phosphate: step 5/6. Its function is as follows. Catalyzes 2 different reactions between oxygen and the acireductone 1,2-dihydroxy-3-keto-5-methylthiopentene (DHK-MTPene) depending upon the metal bound in the active site. Fe-containing acireductone dioxygenase (Fe-ARD) produces formate and 2-keto-4-methylthiobutyrate (KMTB), the alpha-ketoacid precursor of methionine in the methionine recycle pathway. Ni-containing acireductone dioxygenase (Ni-ARD) produces methylthiopropionate, carbon monoxide and formate, and does not lie on the methionine recycle pathway. The polypeptide is Acireductone dioxygenase (Synechococcus sp. (strain CC9902)).